The following is a 263-amino-acid chain: Endonuclease 8 (263 aa).

The active-site Schiff-base intermediate with DNA is P2. E3 acts as the Proton donor in catalysis. K53 (proton donor; for beta-elimination activity) is an active-site residue. Positions 70, 125, and 169 each coordinate DNA. The segment at 229-263 (KVFHRDGELCERCGGIIEKTTLSSRPFYWCPGCQH) adopts an FPG-type zinc-finger fold. The Proton donor; for delta-elimination activity role is filled by R253.

The protein belongs to the FPG family. It depends on Zn(2+) as a cofactor.

It catalyses the reaction 2'-deoxyribonucleotide-(2'-deoxyribose 5'-phosphate)-2'-deoxyribonucleotide-DNA = a 3'-end 2'-deoxyribonucleotide-(2,3-dehydro-2,3-deoxyribose 5'-phosphate)-DNA + a 5'-end 5'-phospho-2'-deoxyribonucleoside-DNA + H(+). In terms of biological role, involved in base excision repair of DNA damaged by oxidation or by mutagenic agents. Acts as a DNA glycosylase that recognizes and removes damaged bases. Has a preference for oxidized pyrimidines, such as thymine glycol, 5,6-dihydrouracil and 5,6-dihydrothymine. Has AP (apurinic/apyrimidinic) lyase activity and introduces nicks in the DNA strand. Cleaves the DNA backbone by beta-delta elimination to generate a single-strand break at the site of the removed base with both 3'- and 5'-phosphates. The polypeptide is Endonuclease 8 (Shigella flexneri serotype 5b (strain 8401)).